A 136-amino-acid chain; its full sequence is Large ribosomal subunit protein uL16 (136 aa).

This sequence belongs to the universal ribosomal protein uL16 family. As to quaternary structure, part of the 50S ribosomal subunit.

Its function is as follows. Binds 23S rRNA and is also seen to make contacts with the A and possibly P site tRNAs. The chain is Large ribosomal subunit protein uL16 from Vibrio vulnificus (strain YJ016).